We begin with the raw amino-acid sequence, 497 residues long: UDP-N-acetylmuramoyl-L-alanyl-D-glutamate--2,6-diaminopimelate ligase (497 aa).

2 residues coordinate UDP-N-acetyl-alpha-D-muramoyl-L-alanyl-D-glutamate: Leu27 and Ser29. 116-122 provides a ligand contact to ATP; the sequence is GTNGKTT. Residues Asn157, 158 to 159, Ser185, Gln191, and Arg193 contribute to the UDP-N-acetyl-alpha-D-muramoyl-L-alanyl-D-glutamate site; that span reads TT. Lys225 is subject to N6-carboxylysine. Residues Arg392, 416–419, Gly467, and Glu471 contribute to the meso-2,6-diaminopimelate site; that span reads DNPR. The short motif at 416 to 419 is the Meso-diaminopimelate recognition motif element; it reads DNPR.

This sequence belongs to the MurCDEF family. MurE subfamily. Mg(2+) serves as cofactor. Post-translationally, carboxylation is probably crucial for Mg(2+) binding and, consequently, for the gamma-phosphate positioning of ATP.

It is found in the cytoplasm. It carries out the reaction UDP-N-acetyl-alpha-D-muramoyl-L-alanyl-D-glutamate + meso-2,6-diaminopimelate + ATP = UDP-N-acetyl-alpha-D-muramoyl-L-alanyl-gamma-D-glutamyl-meso-2,6-diaminopimelate + ADP + phosphate + H(+). The protein operates within cell wall biogenesis; peptidoglycan biosynthesis. Functionally, catalyzes the addition of meso-diaminopimelic acid to the nucleotide precursor UDP-N-acetylmuramoyl-L-alanyl-D-glutamate (UMAG) in the biosynthesis of bacterial cell-wall peptidoglycan. The protein is UDP-N-acetylmuramoyl-L-alanyl-D-glutamate--2,6-diaminopimelate ligase of Buchnera aphidicola subsp. Schizaphis graminum (strain Sg).